Here is a 277-residue protein sequence, read N- to C-terminus: Large ribosomal subunit protein uL2 (277 aa).

Residues 219–277 form a disordered region; that stretch reads TVRGSVMNPNDHPHGGGEGKAPVGRKAPSTPWGKPALGLKTRNKKAKSDKLIVRRRNEK. Positions 264–277 are enriched in basic and acidic residues; sequence AKSDKLIVRRRNEK.

The protein belongs to the universal ribosomal protein uL2 family. Part of the 50S ribosomal subunit. Forms a bridge to the 30S subunit in the 70S ribosome.

In terms of biological role, one of the primary rRNA binding proteins. Required for association of the 30S and 50S subunits to form the 70S ribosome, for tRNA binding and peptide bond formation. It has been suggested to have peptidyltransferase activity; this is somewhat controversial. Makes several contacts with the 16S rRNA in the 70S ribosome. This is Large ribosomal subunit protein uL2 from Streptococcus pyogenes serotype M1.